The following is a 136-amino-acid chain: Small ribosomal subunit protein uS9 (136 aa).

The protein belongs to the universal ribosomal protein uS9 family.

The chain is Small ribosomal subunit protein uS9 from Borrelia hermsii (strain HS1 / DAH).